Consider the following 360-residue polypeptide: Peptide chain release factor 1 (360 aa).

N5-methylglutamine is present on Gln235. A disordered region spans residues 284 to 313 (AKRQQAEASTRRNLLGSGDRSDRNRTYNFP).

Belongs to the prokaryotic/mitochondrial release factor family. Post-translationally, methylated by PrmC. Methylation increases the termination efficiency of RF1.

The protein localises to the cytoplasm. In terms of biological role, peptide chain release factor 1 directs the termination of translation in response to the peptide chain termination codons UAG and UAA. The chain is Peptide chain release factor 1 from Escherichia coli (strain UTI89 / UPEC).